The primary structure comprises 79 residues: UPF0291 protein lp_2062 (79 aa).

It belongs to the UPF0291 family.

The protein localises to the cytoplasm. In Lactiplantibacillus plantarum (strain ATCC BAA-793 / NCIMB 8826 / WCFS1) (Lactobacillus plantarum), this protein is UPF0291 protein lp_2062.